We begin with the raw amino-acid sequence, 417 residues long: Cobalamin binding intrinsic factor (417 aa).

The N-terminal stretch at 1 to 22 (MAWFSLHLLHLLWAAAGTSTWA) is a signal peptide. 3 disulfide bridges follow: cysteine 26-cysteine 246, cysteine 103-cysteine 288, and cysteine 143-cysteine 182. An N-linked (GlcNAc...) asparagine glycan is attached at asparagine 100. Position 171 (aspartate 171) interacts with cob(II)alamin. Serine 191 is modified (phosphoserine). A glycan (N-linked (GlcNAc...) asparagine) is linked at asparagine 209. Cob(II)alamin-binding residues include aspartate 222 and glutamine 270. Residues asparagine 311 and asparagine 330 are each glycosylated (N-linked (GlcNAc...) asparagine). Cob(II)alamin-binding positions include 365–370 (SWGLVV) and 386–395 (WQFLSGKTPL). A glycan (N-linked (GlcNAc...) asparagine) is linked at asparagine 413.

The protein belongs to the eukaryotic cobalamin transport proteins family. Interacts with CUBN (via CUB domains).

Its subcellular location is the secreted. Its function is as follows. Promotes absorption of the essential vitamin cobalamin (Cbl) in the ileum. After interaction with CUBN, the CBLIF-cobalamin complex is internalized via receptor-mediated endocytosis. The chain is Cobalamin binding intrinsic factor (CBLIF) from Canis lupus familiaris (Dog).